Reading from the N-terminus, the 172-residue chain is Large ribosomal subunit protein uL10 (172 aa).

Belongs to the universal ribosomal protein uL10 family. Part of the ribosomal stalk of the 50S ribosomal subunit. The N-terminus interacts with L11 and the large rRNA to form the base of the stalk. The C-terminus forms an elongated spine to which L12 dimers bind in a sequential fashion forming a multimeric L10(L12)X complex.

Its function is as follows. Forms part of the ribosomal stalk, playing a central role in the interaction of the ribosome with GTP-bound translation factors. This Rhodospirillum rubrum (strain ATCC 11170 / ATH 1.1.1 / DSM 467 / LMG 4362 / NCIMB 8255 / S1) protein is Large ribosomal subunit protein uL10.